The chain runs to 117 residues: uncharacterized protein (117 aa).

Positions Met1–Ser20 are cleaved as a signal peptide.

This is an uncharacterized protein from Saccharomyces cerevisiae (strain ATCC 204508 / S288c) (Baker's yeast).